The sequence spans 385 residues: uncharacterized protein (385 aa).

This sequence belongs to the peptidase M20 family.

This is an uncharacterized protein from Staphylococcus saprophyticus subsp. saprophyticus (strain ATCC 15305 / DSM 20229 / NCIMB 8711 / NCTC 7292 / S-41).